Consider the following 185-residue polypeptide: Ribosome-recycling factor (185 aa).

The tract at residues 138–160 is disordered; the sequence is AMDKAVKDGEVGEDEGARGEKEL.

The protein belongs to the RRF family.

It localises to the cytoplasm. Responsible for the release of ribosomes from messenger RNA at the termination of protein biosynthesis. May increase the efficiency of translation by recycling ribosomes from one round of translation to another. The chain is Ribosome-recycling factor from Micrococcus luteus (strain ATCC 4698 / DSM 20030 / JCM 1464 / CCM 169 / CCUG 5858 / IAM 1056 / NBRC 3333 / NCIMB 9278 / NCTC 2665 / VKM Ac-2230) (Micrococcus lysodeikticus).